The primary structure comprises 465 residues: Mitochondrial F-box protein MFB1 (465 aa).

Residues 14 to 60 form the F-box domain; sequence ERSLTNLPLNLLFRILSHLDMNDLQNIGKTCTLLRMLANENIVYRNA. Residues 253–279 form a disordered region; that stretch reads FTKSRDPDYKEMTPTSTESSDSITRLR. The span at 254–263 shows a compositional bias: basic and acidic residues; the sequence is TKSRDPDYKE. Positions 265–275 are enriched in polar residues; the sequence is TPTSTESSDSI.

The protein resides in the mitochondrion. The protein is Mitochondrial F-box protein MFB1 (MFB1) of Saccharomyces cerevisiae (strain ATCC 204508 / S288c) (Baker's yeast).